An 87-amino-acid polypeptide reads, in one-letter code: Probable Fe(2+)-trafficking protein (87 aa).

This sequence belongs to the Fe(2+)-trafficking protein family. Monomer.

Could be a mediator in iron transactions between iron acquisition and iron-requiring processes, such as synthesis and/or repair of Fe-S clusters in biosynthetic enzymes. This is Probable Fe(2+)-trafficking protein from Buchnera aphidicola subsp. Baizongia pistaciae (strain Bp).